A 64-amino-acid chain; its full sequence is Small, acid-soluble spore protein D (64 aa).

It belongs to the alpha/beta-type SASP family.

Its function is as follows. SASP are bound to spore DNA. They are double-stranded DNA-binding proteins that cause DNA to change to an a-like conformation. They protect the DNA backbone from chemical and enzymatic cleavage and are thus involved in dormant spore's high resistance to UV light. This is Small, acid-soluble spore protein D (sspD) from Bacillus subtilis (strain 168).